Reading from the N-terminus, the 372-residue chain is Gustatory and pheromone receptor 39a, isoform B (372 aa).

At 1-32 (MGTRNRKLLFFLHYQRYLGLTNLDFSKSLHIY) the chain is on the cytoplasmic side. Residues 33–53 (WLHGTWSSTAIQIVVVGVFMA) traverse the membrane as a helical segment. The Extracellular portion of the chain corresponds to 54–59 (ALLGAL). A helical membrane pass occupies residues 60–80 (AESLYYMETKSQTGNTFDNAV). Residues 81-122 (ILTTSVTQLLANLWLRSQQKSQVNLLQRLSQVVELLQFEPYA) lie on the Cytoplasmic side of the membrane. A helical transmembrane segment spans residues 123–143 (VPQFRWLYRIWLLVCLIYGAM). At 144 to 147 (VTHF) the chain is on the extracellular side. Residues 148–168 (GINWLTTMQISRVLTLIGFVY) form a helical membrane-spanning segment. At 169-224 (RCVLANFQFTCYTGMVVILKKLLQVQVKQLEHLVSTTTISMAGVAGCLRTHDEILL) the chain is on the cytoplasmic side. Residues 225-245 (LGQRELIAVYGGVILFLFIYQ) traverse the membrane as a helical segment. The Extracellular segment spans residues 246–265 (VMQCILIFYISNLEGFHSSN). Residues 266-286 (DLVLIFCWLAPMLFYLILPLV) form a helical membrane-spanning segment. Over 287–348 (VNDIHNQANK…KSTLFKLFTA (62 aa)) the chain is Cytoplasmic. The helical transmembrane segment at 349–368 (IFTYMVILVQFKEMENSTKS) threads the bilayer. A topological domain (extracellular) is located at residue Ile-369.

This sequence belongs to the insect chemoreceptor superfamily. Gustatory receptor (GR) family. Gr21a subfamily. Expressed in the adult labellar chemosensory neurons. In larvae, is expressed in neurons of the terminal external chemosensory organ, as well as in the dorsal and posterior pharyngeal sense organs.

Its subcellular location is the cell membrane. Gustatory receptor which mediates acceptance or avoidance behavior, depending on its substrates. Plays a role in sustaining courtship behavior in males, possibly through the reception of a stimulating arrestant pheromone. The chain is Gustatory and pheromone receptor 39a, isoform B (Gr39a) from Drosophila melanogaster (Fruit fly).